We begin with the raw amino-acid sequence, 473 residues long: Pre-mRNA-splicing factor prp5 (473 aa).

7 WD repeats span residues 161 to 191, 203 to 233, 245 to 275, 287 to 317, 329 to 358, 370 to 399, and 419 to 449; these read GHLG…KIWD, GHIA…KCWD, GHLS…RVWD, GHKS…RLWD, HHKK…KHWK, GHNA…CFWD, and DSEA…KIYK.

The protein belongs to the WD repeat PRL1/PRL2 family. As to quaternary structure, belongs to the 40S cdc5-associated complex (or cwf complex), a spliceosome sub-complex reminiscent of a late-stage spliceosome composed of the U2, U5 and U6 snRNAs and at least brr2, cdc5, cwf2/prp3, cwf3/syf1, cwf4/syf3, cwf5/ecm2, spp42/cwf6, cwf7/spf27, cwf8, cwf9, cwf10, cwf11, cwf12, prp45/cwf13, cwf14, cwf15, cwf16, cwf17, cwf18, cwf19, cwf20, cwf21, cwf22, cwf23, cwf24, cwf25, cwf26, cyp7/cwf27, cwf28, cwf29/ist3, lea1, msl1, prp5/cwf1, prp10, prp12/sap130, prp17, prp22, sap61, sap62, sap114, sap145, slu7, smb1, smd1, smd3, smf1, smg1 and syf2.

It is found in the nucleus. Required for both cell cycle progression at G2/M and pre-mRNA splicing. Interacts genetically with the PRP4 kinase. This Schizosaccharomyces pombe (strain 972 / ATCC 24843) (Fission yeast) protein is Pre-mRNA-splicing factor prp5 (prp5).